Consider the following 173-residue polypeptide: NADH-ubiquinone oxidoreductase chain 6 (173 aa).

Helical transmembrane passes span 1 to 21, 27 to 47, 48 to 68, 87 to 107, and 139 to 159; these read MTYF…AVAS, YGVL…LSLG, VSFI…VVFV, VVIY…VGDF, and WGAG…FVVL.

It belongs to the complex I subunit 6 family.

It is found in the mitochondrion membrane. It catalyses the reaction a ubiquinone + NADH + 5 H(+)(in) = a ubiquinol + NAD(+) + 4 H(+)(out). Its function is as follows. Core subunit of the mitochondrial membrane respiratory chain NADH dehydrogenase (Complex I) that is believed to belong to the minimal assembly required for catalysis. Complex I functions in the transfer of electrons from NADH to the respiratory chain. The immediate electron acceptor for the enzyme is believed to be ubiquinone. The sequence is that of NADH-ubiquinone oxidoreductase chain 6 (MT-ND6) from Struthio camelus (Common ostrich).